Here is a 682-residue protein sequence, read N- to C-terminus: Heat shock 70 kDa protein 10, mitochondrial (682 aa).

The transit peptide at 1–50 (MATAALLRSIRRREVVSSPFSAYRCLSSSGKASLNSSYLGQNFRSFSRAF) directs the protein to the mitochondrion. Residues 646–682 (KIGEHMSGGSGGGSAPGGGSEGGSDQAPEAEYEEVKK) form a disordered region. Residues 651–667 (MSGGSGGGSAPGGGSEG) are compositionally biased toward gly residues. Over residues 673–682 (PEAEYEEVKK) the composition is skewed to acidic residues.

The protein belongs to the heat shock protein 70 (TC 1.A.33) family. DnaK subfamily.

It localises to the mitochondrion. Its function is as follows. Chaperone involved in the maturation of iron-sulfur [Fe-S] cluster-containing proteins. Has a low intrinsic ATPase activity which is markedly stimulated by HSCB and ISU1. In cooperation with other chaperones, Hsp70s are key components that facilitate folding of de novo synthesized proteins, assist translocation of precursor proteins into organelles, and are responsible for degradation of damaged protein under stress conditions. The sequence is that of Heat shock 70 kDa protein 10, mitochondrial from Arabidopsis thaliana (Mouse-ear cress).